Reading from the N-terminus, the 400-residue chain is NADH-quinone oxidoreductase subunit D (400 aa).

It belongs to the complex I 49 kDa subunit family. In terms of assembly, NDH-1 is composed of 14 different subunits. Subunits NuoB, C, D, E, F, and G constitute the peripheral sector of the complex.

The protein localises to the cell inner membrane. The catalysed reaction is a quinone + NADH + 5 H(+)(in) = a quinol + NAD(+) + 4 H(+)(out). Its function is as follows. NDH-1 shuttles electrons from NADH, via FMN and iron-sulfur (Fe-S) centers, to quinones in the respiratory chain. The immediate electron acceptor for the enzyme in this species is believed to be a menaquinone. Couples the redox reaction to proton translocation (for every two electrons transferred, four hydrogen ions are translocated across the cytoplasmic membrane), and thus conserves the redox energy in a proton gradient. This is NADH-quinone oxidoreductase subunit D from Chlorobaculum tepidum (strain ATCC 49652 / DSM 12025 / NBRC 103806 / TLS) (Chlorobium tepidum).